A 269-amino-acid chain; its full sequence is HTH-type transcriptional regulator Rv0792c (269 aa).

The region spanning 20 to 88 (VPASTQLAEA…QGLGTFVADP (69 aa)) is the HTH gntR-type domain. Residues 48–67 (ERELIDRSGLSRVTVRAAVG) constitute a DNA-binding region (H-T-H motif).

In terms of assembly, homodimer.

Its activity is regulated as follows. DNA-binding activity is increased in the presence of L-arabinose and inhibited by the small molecule I-OMe-Tyrphostin. Transcriptional regulator required for survival in oxidative stress and for establishing infection in host tissues. Regulates the expression of a subset of genes involved in oxidative stress adaptation and virulence, enabling the bacteria to adapt and persist in host tissues. The polypeptide is HTH-type transcriptional regulator Rv0792c (Mycobacterium tuberculosis (strain ATCC 25618 / H37Rv)).